Consider the following 153-residue polypeptide: Arginine repressor (153 aa).

The protein belongs to the ArgR family.

It is found in the cytoplasm. It participates in amino-acid biosynthesis; L-arginine biosynthesis [regulation]. In terms of biological role, regulates arginine biosynthesis genes. This Actinobacillus pleuropneumoniae serotype 3 (strain JL03) protein is Arginine repressor.